We begin with the raw amino-acid sequence, 516 residues long: Maturase K (516 aa).

The protein belongs to the intron maturase 2 family. MatK subfamily.

Its subcellular location is the plastid. It localises to the chloroplast. Its function is as follows. Usually encoded in the trnK tRNA gene intron. Probably assists in splicing its own and other chloroplast group II introns. The sequence is that of Maturase K from Cypripedium calceolus (Yellow lady's slipper).